Here is a 211-residue protein sequence, read N- to C-terminus: Uracil phosphoribosyltransferase (211 aa).

Residues Arg81, Arg106, and 133–141 contribute to the 5-phospho-alpha-D-ribose 1-diphosphate site; that span reads DPMLATGNS. Uracil is bound by residues Ile196 and 201–203; that span reads GDA. Position 202 (Asp202) interacts with 5-phospho-alpha-D-ribose 1-diphosphate.

This sequence belongs to the UPRTase family. The cofactor is Mg(2+).

The enzyme catalyses UMP + diphosphate = 5-phospho-alpha-D-ribose 1-diphosphate + uracil. Its pathway is pyrimidine metabolism; UMP biosynthesis via salvage pathway; UMP from uracil: step 1/1. With respect to regulation, allosterically activated by GTP. In terms of biological role, catalyzes the conversion of uracil and 5-phospho-alpha-D-ribose 1-diphosphate (PRPP) to UMP and diphosphate. This is Uracil phosphoribosyltransferase from Paracoccus denitrificans (strain Pd 1222).